The primary structure comprises 273 residues: Ciliary microtubule inner protein 2B (273 aa).

2 disordered regions span residues 59–85 (TLLP…GHER) and 123–164 (RHGE…HASP). Residues 123 to 159 (RHGEQESHQLPDGAKGEREVEEDQLREAEEPPLKQEL) are compositionally biased toward basic and acidic residues.

Belongs to the CIMIP2 family. Microtubule inner protein component of sperm flagellar doublet microtubules. In terms of tissue distribution, expressed in airway epithelial cells.

The protein localises to the cytoplasm. It is found in the cytoskeleton. It localises to the cilium axoneme. The protein resides in the flagellum axoneme. Its function is as follows. Microtubule inner protein (MIP) part of the dynein-decorated doublet microtubules (DMTs) in cilia axoneme, which is required for motile cilia beating. The chain is Ciliary microtubule inner protein 2B (Cimip2b) from Mus musculus (Mouse).